A 792-amino-acid chain; its full sequence is Probable G-protein coupled receptor 156 (792 aa).

Residues 1–49 (MEPEINCSEFCDSFPGQELDRRPLHDLCKTTITDSQHGSADISPLSPAL) lie on the Extracellular side of the membrane. Asparagine 6 carries an N-linked (GlcNAc...) asparagine glycan. The helical transmembrane segment at 50 to 70 (LGVIWTFLSCGLLLVLFFLAF) threads the bilayer. At 71–86 (TIRCRKNRIVKMSSPN) the chain is on the cytoplasmic side. The chain crosses the membrane as a helical span at residues 87–107 (LNIVTLLGSCLTYSSAYLFGI). At 108–118 (QDALVGSSVEA) the chain is on the extracellular side. Residues 119 to 139 (LIQTRLSLLCIGTTLVFGPIL) form a helical membrane-spanning segment. At 140-164 (GKSWRLYKVFTQRVPDKRVIIKDLQ) the chain is on the cytoplasmic side. The chain crosses the membrane as a helical span at residues 165 to 185 (LLGLVAALVVADVILLVTWVL). The Extracellular segment spans residues 186–222 (TDPIQCLQILGVSMKVTGRDVSCSLTNTHFCASRYSD). The chain crosses the membrane as a helical span at residues 223 to 243 (VWIALVLGCKGLLLLYGAYLA). At 244 to 257 (GLTNHVSSPPVNQS) the chain is on the cytoplasmic side. The helical transmembrane segment at 258–278 (LTIMVGVNLLLLTAGLLFVVT) threads the bilayer. The Extracellular segment spans residues 279-287 (RYLHSWPNL). Residues 288-308 (VFGLTSGGIFVCTTTVNCCVF) form a helical membrane-spanning segment. Over 309 to 792 (LPQLRQRKAF…FKDDLKPTLV (484 aa)) the chain is Cytoplasmic. Residues 354-390 (EXSCMERLLTEKNAVIESLQEQVSNAKEKLVKLMSAE) adopt a coiled-coil conformation. Disordered stretches follow at residues 407 to 457 (GGPA…KYDM), 469 to 516 (GCSQ…EVLP), and 538 to 704 (DLGT…QRQP). Positions 422 to 434 (AAAEDSLPASAAS) are enriched in low complexity. Composition is skewed to basic and acidic residues over residues 443 to 457 (SRRD…KYDM) and 474 to 486 (PKAE…ERGN). Residues 554–567 (PWKSNTSGSPQKLS) show a composition bias toward polar residues. Positions 578–589 (VRRRRAAQRARS) are enriched in basic residues. Over residues 602–619 (QANNTVSGSQNGLIVQNR) the composition is skewed to polar residues. Over residues 620–635 (DSPRLDHHNARSKEPR) the composition is skewed to basic and acidic residues. Residues 675–704 (PRQPSASAPAQSSTAPCLSSXPALPRQRQP) are compositionally biased toward low complexity.

The protein belongs to the G-protein coupled receptor 3 family. GABA-B receptor subfamily. In terms of tissue distribution, widely expressed throughout the brain and is particularly dense in the olfactory tubercles, islands of Calleja, nucleus accumbens, piriform cortex and all fields of the hippocampus.

It is found in the cell membrane. Orphan G-protein coupled receptor involved in the regulation of hair cell orientation in mechanosensory organs of the inner ear. It is required to trigger a 180 degree reversal in hair cell orientation, creating a virtual line of polarity reversal (LPR) across which stereociliary bundles are arranged in opposite orientations. The protein is Probable G-protein coupled receptor 156 (Gpr156) of Rattus norvegicus (Rat).